Here is a 400-residue protein sequence, read N- to C-terminus: Nicotinate phosphoribosyltransferase (400 aa).

Residue His220 is modified to Phosphohistidine; by autocatalysis.

Belongs to the NAPRTase family. Post-translationally, transiently phosphorylated on a His residue during the reaction cycle. Phosphorylation strongly increases the affinity for substrates and increases the rate of nicotinate D-ribonucleotide production. Dephosphorylation regenerates the low-affinity form of the enzyme, leading to product release.

The catalysed reaction is nicotinate + 5-phospho-alpha-D-ribose 1-diphosphate + ATP + H2O = nicotinate beta-D-ribonucleotide + ADP + phosphate + diphosphate. It functions in the pathway cofactor biosynthesis; NAD(+) biosynthesis; nicotinate D-ribonucleotide from nicotinate: step 1/1. Catalyzes the synthesis of beta-nicotinate D-ribonucleotide from nicotinate and 5-phospho-D-ribose 1-phosphate at the expense of ATP. The polypeptide is Nicotinate phosphoribosyltransferase (Escherichia coli O45:K1 (strain S88 / ExPEC)).